A 410-amino-acid polypeptide reads, in one-letter code: Acyl-CoA-binding domain-containing protein 5-B (410 aa).

The 90-residue stretch at 12–101 folds into the ACB domain; that stretch reads AQKRFEAAVK…IQLIIETLPV (90 aa). An acyl-CoA is bound by residues 23-32, 43-47, K69, and Y88; these read IRSLPEDGSY and YSYYK. Over residues 119 to 128 the composition is skewed to acidic residues; that stretch reads VEDDDDDDDE. Disordered regions lie at residues 119-165, 221-242, and 254-320; these read VEDD…LDDY, SDDEMDSDSMDKPATPEKGSGV, and GANM…DRMD. Residues 326 to 355 adopt a coiled-coil conformation; that stretch reads TQITTILSELEDNMQDVLRRLTTLEQLTAS. At 382–404 the chain is embedded in the membrane; sequence SPFTAVLTVLWPFAVHWLVQFYL.

It is found in the membrane. Functionally, binds medium- and long-chain acyl-CoA esters. In Danio rerio (Zebrafish), this protein is Acyl-CoA-binding domain-containing protein 5-B (acbd5b).